We begin with the raw amino-acid sequence, 148 residues long: Probable calcium-binding protein CML7 (148 aa).

3 consecutive EF-hand domains span residues 9 to 44, 80 to 115, and 116 to 148; these read EQVA…LGGN, PFDR…IGEK, and LEPH…IVAK. Positions 22, 24, 26, 28, 33, 93, 95, 97, 99, and 104 each coordinate Ca(2+).

Its function is as follows. Potential calcium sensor. This chain is Probable calcium-binding protein CML7 (CML7), found in Oryza sativa subsp. japonica (Rice).